The chain runs to 297 residues: MNDRADFVVPDITTRKNVGLSHDANDFTLPQPLDRYSAEDHATWATLYQRQCKLLPGRACDEFMEGLERLEVDADRVPDFNKLNQKLMAATGWKIVAVPGLIPDDVFFEHLANRRFPVTWWLREPHQLDYLQEPDVFHDLFGHVPLLINPVFADYLEAYGKGGVKAKALGALPMLARLYWYTVEFGLINTPAGMRIYGAGILSSKSESIYCLDSASPNRVGFDLMRIMNTRYRIDTFQKTYFVIDSFKQLFDATAPDFAPLYLQLADAQPWGAGDVAPDDLVLNAGDRQGWADTEDV.

The Fe cation site is built by His-138, His-143, and Glu-184.

Belongs to the biopterin-dependent aromatic amino acid hydroxylase family. Monomer. Fe(2+) serves as cofactor.

It catalyses the reaction (6R)-L-erythro-5,6,7,8-tetrahydrobiopterin + L-phenylalanine + O2 = (4aS,6R)-4a-hydroxy-L-erythro-5,6,7,8-tetrahydrobiopterin + L-tyrosine. It participates in amino-acid degradation; L-phenylalanine degradation; acetoacetate and fumarate from L-phenylalanine: step 1/6. This is Phenylalanine-4-hydroxylase (phhA) from Chromobacterium violaceum (strain ATCC 12472 / DSM 30191 / JCM 1249 / CCUG 213 / NBRC 12614 / NCIMB 9131 / NCTC 9757 / MK).